Consider the following 511-residue polypeptide: Activin receptor type-2B (511 aa).

A signal peptide spans 1–20 (MGASVALTFLLLLATFRAGS). The Extracellular portion of the chain corresponds to 21–136 (GHDEVETREC…KPQPSASVLN (116 aa)). The cysteines at positions 30 and 61 are disulfide-linked. N-linked (GlcNAc...) asparagine glycans are attached at residues asparagine 43 and asparagine 67. Disulfide bonds link cysteine 86–cysteine 105, cysteine 92–cysteine 104, and cysteine 106–cysteine 111. Residues 137–157 (ILIYSLLPIVGLSMAILLAFW) form a helical membrane-spanning segment. Over 158–511 (MYRHRKPSYG…VDLPPKESSI (354 aa)) the chain is Cytoplasmic. The 289-residue stretch at 189–477 (LQLLDIKARG…LSAGCVEERI (289 aa)) folds into the Protein kinase domain. Residues 195–203 (KARGRFGCV) and lysine 216 each bind ATP. Residue aspartate 320 is the Proton acceptor of the active site.

The protein belongs to the protein kinase superfamily. TKL Ser/Thr protein kinase family. TGFB receptor subfamily.

The protein resides in the membrane. The catalysed reaction is L-threonyl-[receptor-protein] + ATP = O-phospho-L-threonyl-[receptor-protein] + ADP + H(+). The enzyme catalyses L-seryl-[receptor-protein] + ATP = O-phospho-L-seryl-[receptor-protein] + ADP + H(+). Receptor for activin A, activin B and inhibin A. Involved in transmembrane signaling. The sequence is that of Activin receptor type-2B (acvr2b) from Xenopus laevis (African clawed frog).